The primary structure comprises 363 residues: tRNA/tmRNA (uracil-C(5))-methyltransferase (363 aa).

5 residues coordinate S-adenosyl-L-methionine: Gln187, Tyr215, Asn220, Glu236, and Asp296. Cys321 serves as the catalytic Nucleophile. Glu355 serves as the catalytic Proton acceptor.

The protein belongs to the class I-like SAM-binding methyltransferase superfamily. RNA M5U methyltransferase family. TrmA subfamily.

It catalyses the reaction uridine(54) in tRNA + S-adenosyl-L-methionine = 5-methyluridine(54) in tRNA + S-adenosyl-L-homocysteine + H(+). The catalysed reaction is uridine(341) in tmRNA + S-adenosyl-L-methionine = 5-methyluridine(341) in tmRNA + S-adenosyl-L-homocysteine + H(+). Functionally, dual-specificity methyltransferase that catalyzes the formation of 5-methyluridine at position 54 (m5U54) in all tRNAs, and that of position 341 (m5U341) in tmRNA (transfer-mRNA). This chain is tRNA/tmRNA (uracil-C(5))-methyltransferase, found in Pseudomonas paraeruginosa (strain DSM 24068 / PA7) (Pseudomonas aeruginosa (strain PA7)).